Consider the following 312-residue polypeptide: Isethionate sulfite-lyase activating enzyme (312 aa).

A Radical SAM core domain is found at H22–E309. [4Fe-4S] cluster is bound by residues C36, C40, C43, C62, C65, C68, C72, C92, C95, C100, and C104. S-adenosyl-L-methionine is bound at residue W42–S44. 4Fe-4S ferredoxin-type domains are found at residues P53–D82 and G83–N115. Residues G144, D193 to K195, and H267 each bind S-adenosyl-L-methionine.

The protein belongs to the organic radical-activating enzymes family. Monomer. Requires [4Fe-4S] cluster as cofactor.

It carries out the reaction glycyl-[protein] + reduced [flavodoxin] + S-adenosyl-L-methionine = glycin-2-yl radical-[protein] + semiquinone [flavodoxin] + 5'-deoxyadenosine + L-methionine + H(+). It functions in the pathway organosulfur degradation; alkanesulfonate degradation. In terms of biological role, involved in an anaerobic respiration pathway that converts the sulfonate taurine (2-aminoethanesulfonate) to ammonia, acetate and sulfide. Catalyzes activation of the isethionate sulfite-lyase IslA under anaerobic conditions by generation of an organic free radical on a glycine residue, via a homolytic cleavage of S-adenosyl-L-methionine (SAM). In Bilophila wadsworthia (strain 3_1_6), this protein is Isethionate sulfite-lyase activating enzyme.